A 311-amino-acid chain; its full sequence is Tricarboxylate transport protein, mitochondrial (311 aa).

The propeptide at 1 to 13 (MAAPRGPRALSAA) is removed in mature form. The disordered stretch occupies residues 1 to 21 (MAAPRGPRALSAAAPGSGKPK). 3 Solcar repeats span residues 23–111 (THPG…LSNH), 122–208 (RRGL…LRNW), and 218–303 (MNPL…VVKL). 3 helical membrane passes run 29 to 46 (ILAGGLAGGIEICITFPT), 86 to 105 (GLSSLLYGSIPKAAVRFGMF), and 129 to 143 (LGAGVAEAVVVVCPM). A Phosphoserine modification is found at Ser156. Transmembrane regions (helical) follow at residues 183 to 202 (GLTATVLKQGSNQAIRFFVM), 224 to 241 (GVFGATAGAASVFGNTPL), and 278 to 297 (GTVPRLGRVCLDVAIVFIIY).

It belongs to the mitochondrial carrier (TC 2.A.29) family. In terms of processing, possesses a short cleavable presequence, which, however, is found to be dispensable both for targeting to mitochondria and insertion into the inner membrane. However, the presequence is required to keep SLC25A1 in a soluble state and thus in an import-competent state. Mature SLC25A1 lacking the presequence is prone to aggregation. As to expression, expressed minimally but ubiquitously throughout the adult brain. Detected at higher levels in the olfactory bulb, neocortex and cerebellum. Also expressed in a subset of large cells in the globus pallidus.

It is found in the mitochondrion inner membrane. It localises to the mitochondrion membrane. It carries out the reaction (S)-malate(in) + citrate(out) = (S)-malate(out) + citrate(in). The catalysed reaction is D-threo-isocitrate(in) + citrate(out) = D-threo-isocitrate(out) + citrate(in). The enzyme catalyses citrate(out) + succinate(in) = citrate(in) + succinate(out). It catalyses the reaction cis-aconitate(in) + citrate(out) = cis-aconitate(out) + citrate(in). It carries out the reaction trans-aconitate(in) + citrate(out) = trans-aconitate(out) + citrate(in). The catalysed reaction is phosphoenolpyruvate(in) + citrate(out) = phosphoenolpyruvate(out) + citrate(in). The enzyme catalyses maleate(in) + citrate(out) = maleate(out) + citrate(in). Its function is as follows. Mitochondrial electroneutral antiporter that exports citrate from the mitochondria into the cytosol in exchange for malate. Also able to mediate the exchange of citrate for isocitrate, phosphoenolpyruvate, cis-aconitate and to a lesser extent trans-aconitate, maleate and succinate. In the cytoplasm, citrate plays important roles in fatty acid and sterol synthesis, regulation of glycolysis, protein acetylation, and other physiopathological processes. In Mus musculus (Mouse), this protein is Tricarboxylate transport protein, mitochondrial.